We begin with the raw amino-acid sequence, 225 residues long: tRNA (guanine-N(1)-)-methyltransferase (225 aa).

S-adenosyl-L-methionine is bound by residues glycine 110 and 130–135 (VGDYVL).

This sequence belongs to the RNA methyltransferase TrmD family. Homodimer.

Its subcellular location is the cytoplasm. The enzyme catalyses guanosine(37) in tRNA + S-adenosyl-L-methionine = N(1)-methylguanosine(37) in tRNA + S-adenosyl-L-homocysteine + H(+). Its function is as follows. Specifically methylates guanosine-37 in various tRNAs. The polypeptide is tRNA (guanine-N(1)-)-methyltransferase (Neorickettsia sennetsu (strain ATCC VR-367 / Miyayama) (Ehrlichia sennetsu)).